A 446-amino-acid polypeptide reads, in one-letter code: 5-methylthioadenosine/S-adenosylhomocysteine deaminase (446 aa).

2 residues coordinate Zn(2+): histidine 72 and histidine 74. 2 residues coordinate substrate: glutamate 101 and histidine 194. Position 221 (histidine 221) interacts with Zn(2+). Residues glutamate 224 and aspartate 309 each coordinate substrate. Aspartate 309 contributes to the Zn(2+) binding site.

Belongs to the metallo-dependent hydrolases superfamily. MTA/SAH deaminase family. Zn(2+) is required as a cofactor.

The enzyme catalyses S-adenosyl-L-homocysteine + H2O + H(+) = S-inosyl-L-homocysteine + NH4(+). It carries out the reaction S-methyl-5'-thioadenosine + H2O + H(+) = S-methyl-5'-thioinosine + NH4(+). Catalyzes the deamination of 5-methylthioadenosine and S-adenosyl-L-homocysteine into 5-methylthioinosine and S-inosyl-L-homocysteine, respectively. Is also able to deaminate adenosine. In Saccharophagus degradans (strain 2-40 / ATCC 43961 / DSM 17024), this protein is 5-methylthioadenosine/S-adenosylhomocysteine deaminase.